The following is a 315-amino-acid chain: Putative HTH-type transcriptional regulatory protein PH1808 (315 aa).

In terms of domain architecture, HTH cro/C1-type spans 131-189 (LKALREEHGYSITELAGILGISRKSLQRYEKGESVVSLEVALRLEEVFDEPLVKPIDVL). The H-T-H motif DNA-binding region spans 142–161 (ITELAGILGISRKSLQRYEK).

The polypeptide is Putative HTH-type transcriptional regulatory protein PH1808 (Pyrococcus horikoshii (strain ATCC 700860 / DSM 12428 / JCM 9974 / NBRC 100139 / OT-3)).